The sequence spans 639 residues: MAAGGAAGLREEQRYGLACGRLGQDNITVLHVKLTETAIRALETYQSHKNLIPFRPSIQFQGLQGLMKIPKNDPFNEVQNFNFYLSNVGRDNPQGSFDCIQQTLSSSGASQLNCLGFIQDKITVCATNDSYQMTRERMTQAEEESRNRSTKVIKPGGPYVGKRVQIRKAPQAISDTVPERKRSTPMNPANTIRKMHSGNSVSQRPYRDRVIHLLALKAYKKPELLARLQKDGVNQKDKNSLGAILQQVANLNPKDLSYTLKDYVFKELQRDWPGYSETDRQTLDLVLSRKLNPSQNASTSRSESPLCSSKDAASSPQKRPLDSDFIDPLMNKKARISHLTNRVPPTLNGYLNPTSEKSCAGLLPPPAAAAIPTLSPLPSTHLPVSNPPQTVNSNSNSPSTPEGLGTQDLPVDSFSQNGSIFEDQQEKYTSRTCLETLPPSSALLKCPKPMEEEHPVSHKKSKKKSKKHKEKDQIKKLDIETMEEKEEDLQREETAKLSNASPNPNEGVKEGCTASMEPSSALELPDYLIKYIAIVSYEQRQNYKDDFNAEYDEYRALHARMETVARRFIKLDAQRKRLSPGSKEYQNVHEEVLQEYQKIKQSSPNYHEEKYRCEYLHNKLAHIKRLIGEFDQQQAESWH.

Disordered stretches follow at residues 175 to 203 (DTVP…SVSQ), 291 to 326 (LNPS…SDFI), 378 to 416 (PSTH…SFSQ), and 439 to 513 (PSSA…EGCT). Residues 291 to 317 (LNPSQNASTSRSESPLCSSKDAASSPQ) are compositionally biased toward polar residues. The span at 378 to 401 (PSTHLPVSNPPQTVNSNSNSPSTP) shows a compositional bias: low complexity. A compositionally biased stretch (basic residues) spans 457–469 (SHKKSKKKSKKHK). Basic and acidic residues predominate over residues 470–479 (EKDQIKKLDI). Positions 480-490 (ETMEEKEEDLQ) are enriched in acidic residues. S501 and S579 each carry phosphoserine. In terms of domain architecture, OCEL spans 525 to 635 (PDYLIKYIAI…LIGEFDQQQA (111 aa)).

Belongs to the ELL/occludin family. As to quaternary structure, component of the super elongation complex (SEC), at least composed of EAF1, EAF2, CDK9, MLLT3/AF9, AFF (AFF1 or AFF4), the P-TEFb complex and ELL (ELL, ELL2 or ELL3). Component of the little elongation complex (LEC), at least composed of ELL (ELL, ELL2 or ELL3), ZC3H8, ICE1 and ICE2. Interacts with AFF4; the interaction is direct and leads to stabilize ELL2 and prevent ELL2 ubiquitination. Interacts with EAF1 and EAF2. In terms of processing, ubiquitinated by SIAH1, leading to its degradation by the proteasome. Interaction with AFF4 stabilizes ELL2 and prevents ELL2 ubiquitination.

Its subcellular location is the nucleus. Elongation factor component of the super elongation complex (SEC), a complex required to increase the catalytic rate of RNA polymerase II transcription by suppressing transient pausing by the polymerase at multiple sites along the DNA. Component of the little elongation complex (LEC), a complex required to regulate small nuclear RNA (snRNA) gene transcription by RNA polymerase II and III. Plays a role in immunoglobulin secretion in plasma cells: directs efficient alternative mRNA processing, influencing both proximal poly(A) site choice and exon skipping, as well as immunoglobulin heavy chain (IgH) alternative processing. Probably acts by regulating histone modifications accompanying transition from membrane-specific to secretory IgH mRNA expression. The polypeptide is RNA polymerase II elongation factor ELL2 (Ell2) (Mus musculus (Mouse)).